The following is a 347-amino-acid chain: Phosphoribosylformylglycinamidine cyclo-ligase (347 aa).

Belongs to the AIR synthase family.

The protein resides in the cytoplasm. It carries out the reaction 2-formamido-N(1)-(5-O-phospho-beta-D-ribosyl)acetamidine + ATP = 5-amino-1-(5-phospho-beta-D-ribosyl)imidazole + ADP + phosphate + H(+). It functions in the pathway purine metabolism; IMP biosynthesis via de novo pathway; 5-amino-1-(5-phospho-D-ribosyl)imidazole from N(2)-formyl-N(1)-(5-phospho-D-ribosyl)glycinamide: step 2/2. In Prochlorococcus marinus (strain MIT 9312), this protein is Phosphoribosylformylglycinamidine cyclo-ligase.